The primary structure comprises 1423 residues: MRPSTVTSRIWWSESSSSSSHDLSGSWEHTSLQRTSDHFSSMGSIDSLDHSSQLYPSGHLSSAKSNSSIDHLGGHSKRDSAYGSFSTCSSTPDHTLPKADASSTENILYKVGLWEASRPGSSRQSQSTGDPQGLQDRPSSFLPRVPGNSSKSPRPEDNIEPKIATSGRSNFGPVWYVPDKKKAPSPPPLGLPLRSDSFAVAARGHEKARGPPFSDLASMQHFTTLPHVQPRGDRRMETTDRQWKLAHPSSGKEIGNVGYQPEGHLDCRWLCSDDRAGRPSGAPGRHQFSLSSTDVHFLKSYHGSQHPQPCSDESPRFPSSPRELLRITPSGCLQEPPELSQDDNPAQVRWPGSVNQKLDDRGRSHYFSVPHRQPVHGSAHVLIPRSDYWHSDTTPVDLECPLLRPDQRGYPQQYEETPASHERGGYQQLNAGIEGCCSGIHEPPRASHTVRAGLQCPGNDFKLVDAESGRISRQRTPMLHSLTQDGAWRPGNSKDCGNEKPPLLDAQVGKPTRRSDRFATTLRNEIQMRRAKLQKSKSTVTLAGDSEAEDCAGDWRVDVGAVPEGSFPSTYKEHLKEAQTRVLKATSFQRRDLDPTPADQYPGPPEHRTCDHSASSSLSSFPGEPDSAPRLCEAGLAKPPSSAGGVPHILRIGGRKRFTAEQKLKSYSEPEKINEVGLSGDHSPHPTIRTSEDSVGTFADRWKFFEETSKSLLQKPGHRQAFCGIPREKAERPQTQGHECESTEPWFQKRSRATSCGEILSEDRKVEKASEKLNPPRRLGTFAEYQASWKEQKKSLEARSSGRYHSADDILDAGLDQQQRPQYIHERSRSSPSTDHYSQEVPVEPNRQAEDSGGQKEALLCTLQAEEGCSAPSSSVLSSAQPQDSQHVNEDPTSPQPEAQLSSKCQHLQTSTMETSRSPSPQFAPQKLTDKPPLLIHEDNSARYCPVTACYVFIPCRLQVFVAGALPQLQTLGIERVMDNNTTVKMVPIKIVHSESQPEKESRQSLACPAELPALPSGLEKDQIKTLSTSEQCYSRFCVYTRQEVETPHRARPPEPQPPSTPAPPVRDSCSSPPSLNYGKAKEKTVDDLKSEELAREIVGKDKSLADILDPSVKIKTTMDLMEGIFPKDEYLLEEAQQRRKLLPKVPSPRVTEDNSCPSLSAICYNLGTRSKSVPVSQLIKIKILASSPRKQDPGMPGVVSLATNSTYYSTSAPKAELLIKMKDLQEPEEYSAGDLDHDLSIKKQELIDSISRKLQVLREARESLLEDIQANNALGDEVEAIVKDVCKPNEFDKFRMFIGDLDKVVNLLLSLSGRLARVENALNNLDDSPSPGDRQSLLEKQRVLTQQHEDAKELKENLDRRERIVFDILATYLSEENLADYEHFVKMKSALIIEQRELEDKIHLGEEQLKCLFDSLQPERSK.

Residues 1–101 (MRPSTVTSRI…PDHTLPKADA (101 aa)) are disordered. Over residues 8–27 (SRIWWSESSSSSSHDLSGSW) the composition is skewed to low complexity. 2 stretches are compositionally biased toward polar residues: residues 28 to 69 (EHTS…NSSI) and 83 to 93 (GSFSTCSSTPD). The residue at position 103 (Ser-103) is a Phosphoserine. A disordered region spans residues 116–171 (ASRPGSSRQSQSTGDPQGLQDRPSSFLPRVPGNSSKSPRPEDNIEPKIATSGRSNF). Residues 119–130 (PGSSRQSQSTGD) show a composition bias toward polar residues. Phosphoserine is present on residues Ser-185, Ser-197, and Ser-291. Disordered stretches follow at residues 300–357 (SYHG…VNQK), 586–630 (TSFQ…SAPR), 758–855 (EILS…SGGQ), 872–930 (PSSS…KLTD), and 1045–1085 (VETP…KEKT). The ASD1 domain maps to 575-677 (LKEAQTRVLK…SEPEKINEVG (103 aa)). Positions 761–771 (SEDRKVEKASE) are enriched in basic and acidic residues. Ser-806, Ser-830, Ser-831, and Ser-833 each carry phosphoserine. Thr-834 bears the Phosphothreonine mark. The segment covering 872–885 (PSSSVLSSAQPQDS) has biased composition (low complexity). Residues 891–923 (DPTSPQPEAQLSSKCQHLQTSTMETSRSPSPQF) are compositionally biased toward polar residues. A phosphoserine mark is found at Ser-918 and Ser-920. A compositionally biased stretch (pro residues) spans 1054-1065 (PEPQPPSTPAPP). 2 positions are modified to phosphoserine: Ser-1072 and Ser-1329. In terms of domain architecture, ASD2 spans 1092-1418 (EELAREIVGK…QLKCLFDSLQ (327 aa)).

The protein belongs to the shroom family. Interacts with F-actin.

The protein localises to the apical cell membrane. Its subcellular location is the cell junction. It is found in the tight junction. It localises to the cytoplasm. The protein resides in the cytoskeleton. May be involved in endothelial cell morphology changes during cell spreading. In the retinal pigment epithelium, may regulate the biogenesis of melanosomes and promote their association with the apical cell surface by inducing gamma-tubulin redistribution. The chain is Protein Shroom2 (Shroom2) from Rattus norvegicus (Rat).